A 226-amino-acid chain; its full sequence is Leucyl/phenylalanyl-tRNA--protein transferase (226 aa).

The protein belongs to the L/F-transferase family.

Its subcellular location is the cytoplasm. The catalysed reaction is N-terminal L-lysyl-[protein] + L-leucyl-tRNA(Leu) = N-terminal L-leucyl-L-lysyl-[protein] + tRNA(Leu) + H(+). It catalyses the reaction N-terminal L-arginyl-[protein] + L-leucyl-tRNA(Leu) = N-terminal L-leucyl-L-arginyl-[protein] + tRNA(Leu) + H(+). It carries out the reaction L-phenylalanyl-tRNA(Phe) + an N-terminal L-alpha-aminoacyl-[protein] = an N-terminal L-phenylalanyl-L-alpha-aminoacyl-[protein] + tRNA(Phe). In terms of biological role, functions in the N-end rule pathway of protein degradation where it conjugates Leu, Phe and, less efficiently, Met from aminoacyl-tRNAs to the N-termini of proteins containing an N-terminal arginine or lysine. This chain is Leucyl/phenylalanyl-tRNA--protein transferase, found in Pseudomonas aeruginosa (strain UCBPP-PA14).